We begin with the raw amino-acid sequence, 239 residues long: Acidic leucine-rich nuclear phosphoprotein 32 family member B (239 aa).

LRR repeat units lie at residues 16–40, 43–64, 65–87, and 89–110; these read AADAKELVLDNCRSDDGKIIGLTSE, SLEFLSMINVNLLSVANLPKLP, KLKKLELSDNRISGGLEVLAERT, and NLTHLNLSGNKIKEINTLEPLK. The 43-residue stretch at 123-165 folds into the LRRCT domain; that stretch reads CEVTMLNNYRESVFELLPKLTFLDGFDADDQEAPDSDPEAEDL. The segment covering 149 to 215 has biased composition (acidic residues); that stretch reads DADDQEAPDS…EEDEDDEDVP (67 aa). A disordered region spans residues 149–239; it reads DADDQEAPDS…EEEEDDEDDE (91 aa). The segment covering 216 to 225 has biased composition (basic and acidic residues); that stretch reads QGEKRKRDLS. Acidic residues predominate over residues 226–239; sequence DEGEEEEEDDEDDE.

This sequence belongs to the ANP32 family.

The protein localises to the nucleus. Functionally, multifunctional protein working as a cell cycle progression factor as well as a cell survival factor. Required for the progression from the G1 to the S phase. Anti-apoptotic protein which functions as a caspase-3 inhibitor. Has no phosphatase 2A (PP2A) inhibitor activity. Exhibits histone chaperone properties, stimulating core histones to assemble into a nucleosome. The chain is Acidic leucine-rich nuclear phosphoprotein 32 family member B (anp32b) from Xenopus laevis (African clawed frog).